Consider the following 1503-residue polypeptide: ATP-binding cassette sub-family C member 6 (1503 aa).

At 1-31 (MAAPAEPCAGQGVWNQTEPEPAATSLLSLCF) the chain is on the extracellular side. Asn-15 carries an N-linked (GlcNAc...) asparagine glycan. Residues 32–52 (LRTAGVWVPPMYLWVLGPIYL) traverse the membrane as a helical segment. The Cytoplasmic segment spans residues 53–72 (LFIHHHGRGYLRMSPLFKAK). The helical transmembrane segment at 73-93 (MVLGFALIVLCTSSVAVALWK) threads the bilayer. The Extracellular segment spans residues 94–98 (IQQGT). Residues 99-119 (PEAPEFLIHPTVWLTTMSFAV) form a helical membrane-spanning segment. The Cytoplasmic portion of the chain corresponds to 120 to 131 (FLIHTERKKGVQ). A helical transmembrane segment spans residues 132–149 (SSGVLFGYWLLCFVLPAT). The Extracellular segment spans residues 150–167 (NAAQQASGAGFQSDPVRH). A helical membrane pass occupies residues 168 to 188 (LSTYLCLSLVVAQFVLSCLAD). Over 189 to 302 (QPPFFPEDPQ…GSQWRPLLKA (114 aa)) the chain is Cytoplasmic. A helical membrane pass occupies residues 303–323 (IWQVFHSTFLLGTLSLIISDV). The 283-residue stretch at 311–593 (FLLGTLSLII…LPFSIHSLVQ (283 aa)) folds into the ABC transmembrane type-1 1 domain. The Extracellular portion of the chain corresponds to 324–349 (FRFTVPKLLSLFLEFIGDPKPPAWKG). A helical transmembrane segment spans residues 350–370 (YLLAVLMFLSACLQTLFEQQN). Residues 371–426 (MYRLKVLQMRLRSAITGLVYRKVLALSSGSRKASAVGDVVNLVSVDVQRLTESVLY) are Cytoplasmic-facing. Residues 427 to 447 (LNGLWLPLVWIVVCFVYLWQL) traverse the membrane as a helical segment. Topologically, residues 448 to 450 (LGP) are extracellular. Residues 451–471 (SALTAIAVFLSLLPLNFFISK) form a helical membrane-spanning segment. The Cytoplasmic portion of the chain corresponds to 472–533 (KRNHHQEEQM…ALRTSGLLFS (62 aa)). The helical transmembrane segment at 534–554 (VSLVSFQVSTFLVALVVFAVH) threads the bilayer. Over 555–575 (TLVAENAMNAEKAFVTLTVLN) the chain is Extracellular. Residues 576-596 (ILNKAQAFLPFSIHSLVQARV) traverse the membrane as a helical segment. Topologically, residues 597-939 (SFDRLVTFLC…VKATVHLAYL (343 aa)) are cytoplasmic. In terms of domain architecture, ABC transporter 1 spans 629–853 (ITIHSATFAW…KGALMCLLDQ (225 aa)). 663 to 670 (GPVGAGKS) provides a ligand contact to ATP. The tract at residues 854–919 (ARQPGDRGEG…LDDPDRAGWP (66 aa)) is disordered. A compositionally biased stretch (basic and acidic residues) spans 881-901 (RRPELRRERSIKSVPEKDRTT). Residues 940–960 (RAVGTPLCLYALFLFLCQQVA) traverse the membrane as a helical segment. The ABC transmembrane type-1 2 domain maps to 947-1228 (CLYALFLFLC…VVRNWTDLEN (282 aa)). Residues 961–997 (SFCRGYWLSLWADDPAVGGQQTQAALRGGIFGLLGCL) lie on the Extracellular side of the membrane. Residues 998–1018 (QAIGLFASMAAVLLGGARASR) traverse the membrane as a helical segment. Over 1019 to 1061 (LLFQRLLWDVVRSPISFFERTPIGHLLNRFSKETDTVDVDIPD) the chain is Cytoplasmic. A helical transmembrane segment spans residues 1062–1082 (KLRSLLMYAFGLLEVSLVVAV). A topological domain (extracellular) is located at residue Ala-1083. A helical transmembrane segment spans residues 1084–1104 (TPLATVAILPLFLLYAGFQSL). Residues 1105 to 1175 (YVVSSCQLRR…VADRWLAANV (71 aa)) are Cytoplasmic-facing. A helical membrane pass occupies residues 1176-1196 (ELLGNGLVFAAATCAVLSKAH). At 1197–1198 (LS) the chain is on the extracellular side. A helical membrane pass occupies residues 1199–1219 (AGLVGFSVSAALQVTQTLQWV). Over 1220–1503 (VRNWTDLENS…YRLAQESGLV (284 aa)) the chain is Cytoplasmic. The ABC transporter 2 domain maps to 1265-1499 (IEFRDFGLRY…KGLFYRLAQE (235 aa)). At Ser-1286 the chain carries Phosphoserine. 1299–1306 (GRTGAGKS) lines the ATP pocket.

It belongs to the ABC transporter superfamily. ABCC family. Conjugate transporter (TC 3.A.1.208) subfamily. Requires Mg(2+) as cofactor. Post-translationally, glycosylated. As to expression, expressed in kidney and liver. Very low expression in other tissues. In testis, localized to peritubular myoid cells, Leydig cells, along the basal membrane of Sertoli cells and moderately in the adluminal compartment of the seminiferous tubules.

It is found in the basal cell membrane. It localises to the basolateral cell membrane. Its subcellular location is the endoplasmic reticulum membrane. It catalyses the reaction an S-substituted glutathione(in) + ATP + H2O = an S-substituted glutathione(out) + ADP + phosphate + H(+). The enzyme catalyses leukotriene C4(in) + ATP + H2O = leukotriene C4(out) + ADP + phosphate + H(+). LTC4 transport is completely inhibited by 1 mM orthovanadate. In terms of biological role, ATP-dependent transporter of the ATP-binding cassette (ABC) family that actively extrudes physiological compounds, and xenobiotics from cells. Mediates ATP-dependent transport of glutathione conjugates such as leukotriene-c4 (LTC4) and N-ethylmaleimide S-glutathione (NEM-GS) (in vitro), and an anionic cyclopentapeptide endothelin antagonist, BQ-123. May contribute to regulate the transport of organic compounds in testes across the blood-testis-barrier. Does not appear to actively transport drugs outside the cell. Confers low levels of cellular resistance to etoposide, teniposide, anthracyclines and cisplatin. Mediates the release of nucleoside triphosphates, predominantly ATP, into the circulation, where it is rapidly converted into AMP and the mineralization inhibitor inorganic pyrophosphate (PPi) by the ecto-enzyme ectonucleotide pyrophosphatase phosphodiesterase 1 (ENPP1), therefore playing a role in PPi homeostasis. Its function is as follows. Inhibits TNF-alpha-mediated apoptosis through blocking one or more caspases. The protein is ATP-binding cassette sub-family C member 6 (ABCC6) of Homo sapiens (Human).